The following is a 192-amino-acid chain: Thymidylate kinase (192 aa).

7–14 (GIDCVGKS) is a binding site for ATP.

The protein belongs to the thymidylate kinase family.

The enzyme catalyses dTMP + ATP = dTDP + ADP. Its function is as follows. Phosphorylation of dTMP to form dTDP in both de novo and salvage pathways of dTTP synthesis. The polypeptide is Thymidylate kinase (Campylobacter jejuni subsp. doylei (strain ATCC BAA-1458 / RM4099 / 269.97)).